The sequence spans 546 residues: Chaperonin GroEL 1 (546 aa).

ATP contacts are provided by residues T29 to P32, D86 to T90, G414, and D499.

It belongs to the chaperonin (HSP60) family. As to quaternary structure, forms a cylinder of 14 subunits composed of two heptameric rings stacked back-to-back. Interacts with the co-chaperonin GroES.

It is found in the cytoplasm. The enzyme catalyses ATP + H2O + a folded polypeptide = ADP + phosphate + an unfolded polypeptide.. Together with its co-chaperonin GroES, plays an essential role in assisting protein folding. The GroEL-GroES system forms a nano-cage that allows encapsulation of the non-native substrate proteins and provides a physical environment optimized to promote and accelerate protein folding. In Roseiflexus sp. (strain RS-1), this protein is Chaperonin GroEL 1.